The primary structure comprises 353 residues: Rhodopsin (353 aa).

Topologically, residues 1–36 (MNGTEGPYFYIPMVNTTGIVRSPYEYPQYYLVNPAA) are extracellular. Residues Asn2 and Asn15 are each glycosylated (N-linked (GlcNAc...) asparagine). Residues 37-61 (YAALGAYMFLLILIGFPVNFLTLYV) form a helical membrane-spanning segment. The Cytoplasmic portion of the chain corresponds to 62–73 (TIEHKKLRTPLN). The helical transmembrane segment at 74–96 (YILLNLAVADLFMVFGGFTTTMY) threads the bilayer. At 97 to 110 (TSMHGYFVLGRLGC) the chain is on the extracellular side. Cys110 and Cys187 form a disulfide bridge. Residues 111–133 (NLEGFFATLGGEIALWSLVVLAV) traverse the membrane as a helical segment. Residues 134–136 (ERW) carry the 'Ionic lock' involved in activated form stabilization motif. The Cytoplasmic portion of the chain corresponds to 134 to 152 (ERWMVVCKPISNFRFGEDH). Residues 153-173 (AIMGLAFTWVMAAACAVPPLV) form a helical membrane-spanning segment. The Extracellular segment spans residues 174-202 (GWSRYIPEGMQCSCGIDYYTRAEGFNNES). Asn200 carries N-linked (GlcNAc...) asparagine glycosylation. Residues 203–224 (FVIYMFVCHFLIPLVVVFFCYG) form a helical membrane-spanning segment. Residues 225-252 (RLLCAVKEAAAAQQESETTQRAEREVSR) are Cytoplasmic-facing. A helical transmembrane segment spans residues 253–274 (MVVIMVVAFLVCWCPYAGVAWY). Residues 275–286 (IFTHQGSEFGPL) are Extracellular-facing. The chain crosses the membrane as a helical span at residues 287-308 (FMTFPAFFAKSSSIYNPMIYIC). Position 296 is an N6-(retinylidene)lysine (Lys296). Residues 309–353 (MNKQFRQCMITTLCCGKNPFEEEEGASTTSKTEASSVSSSSVSPA) lie on the Cytoplasmic side of the membrane. 2 S-palmitoyl cysteine lipidation sites follow: Cys322 and Cys323. The interval 329–353 (EEEEGASTTSKTEASSVSSSSVSPA) is disordered. Low complexity predominate over residues 334 to 353 (ASTTSKTEASSVSSSSVSPA).

The protein belongs to the G-protein coupled receptor 1 family. Opsin subfamily. In terms of processing, phosphorylated on some or all of the serine and threonine residues present in the C-terminal region. Contains one covalently linked retinal chromophore.

Its subcellular location is the membrane. The protein resides in the cell projection. It is found in the cilium. It localises to the photoreceptor outer segment. Its function is as follows. Photoreceptor required for image-forming vision at low light intensity. While most salt water fish species use retinal as chromophore, most freshwater fish use 3-dehydroretinal, or a mixture of retinal and 3-dehydroretinal. Light-induced isomerization of 11-cis to all-trans retinal triggers a conformational change that activates signaling via G-proteins. Subsequent receptor phosphorylation mediates displacement of the bound G-protein alpha subunit by arrestin and terminates signaling. The chain is Rhodopsin (rho) from Chelon auratus (Golden grey mullet).